The following is a 361-amino-acid chain: 3-dehydroquinate synthase (361 aa).

NAD(+)-binding positions include 71–76 (DGEQNK), 105–109 (GVIGD), 129–130 (TT), Lys-142, Lys-151, and 169–172 (CLNT). Residues Glu-184, His-247, and His-264 each coordinate Zn(2+).

Belongs to the sugar phosphate cyclases superfamily. Dehydroquinate synthase family. Requires Co(2+) as cofactor. The cofactor is Zn(2+). NAD(+) serves as cofactor.

The protein localises to the cytoplasm. It carries out the reaction 7-phospho-2-dehydro-3-deoxy-D-arabino-heptonate = 3-dehydroquinate + phosphate. Its pathway is metabolic intermediate biosynthesis; chorismate biosynthesis; chorismate from D-erythrose 4-phosphate and phosphoenolpyruvate: step 2/7. In terms of biological role, catalyzes the conversion of 3-deoxy-D-arabino-heptulosonate 7-phosphate (DAHP) to dehydroquinate (DHQ). The polypeptide is 3-dehydroquinate synthase (Sodalis glossinidius (strain morsitans)).